A 610-amino-acid chain; its full sequence is Menin (610 aa).

Residues 214–390 form an interaction with FANCD2 region; the sequence is GVAERSWLYL…SLLEAGEERP (177 aa). The interval 462-552 is disordered; sequence AEAAEAEELW…SPPPEGPVLT (91 aa). The span at 484-500 shows a compositional bias: basic and acidic residues; that stretch reads RRESKPEEPPPPKKPAL. Phosphoserine is present on residues Ser-487 and Ser-543. The span at 537 to 548 shows a compositional bias: pro residues; the sequence is APAPAASPPPEG. Phosphothreonine is present on Thr-594.

Component of the MLL-HCF complex, at least composed of KMT2A/MLL1, MEN1, ASH2L, RBBP5, DPY30, WDR5, HCFC1 and HCFC2. Component of the menin-associated histone methyltransferase complex, at least composed of KMT2B/MLL4, MEN1, ASH2L, RBBP5, DPY30 and WDR5. Interacts with POLR2B. Interacts with POLR2A phosphorylated at 'Ser-5', but not with the unphosphorylated, nor 'Ser-2' phosphorylated POLR2A forms. Interacts with FANCD2 and DBF4. Interacts with SMAD3, but not with SMAD2, nor SMAD4. Directly interacts with NFKB1, NFKB2 and RELA. Interacts with JUND (via MBM motif); inhibits the interaction of JUND with MAPK10 and the phosphorylation of JUND by MAP kinases MAPK8 and MAPK10. Interacts with KMT2A (via MBM motif). The KMT2A-MEN1 complex interacts with PSIP1 with a greater affinity as MEN1 enhances interaction of KMT2A with PSIP1.

The protein resides in the nucleus. Essential component of a MLL/SET1 histone methyltransferase (HMT) complex, a complex that specifically methylates 'Lys-4' of histone H3 (H3K4). Functions as a transcriptional regulator. Binds to the TERT promoter and represses telomerase expression. Plays a role in TGFB1-mediated inhibition of cell-proliferation, possibly regulating SMAD3 transcriptional activity. Represses JUND-mediated transcriptional activation on AP1 sites, as well as that mediated by NFKB subunit RELA. Positively regulates HOXC8 and HOXC6 gene expression. May be involved in normal hematopoiesis through the activation of HOXA9 expression. May be involved in DNA repair. This is Menin (MEN1) from Canis lupus familiaris (Dog).